A 735-amino-acid polypeptide reads, in one-letter code: Glycogen [starch] synthase, muscle (735 aa).

S8 is subject to Phosphoserine; by AMPK and PKA. Phosphoserine is present on S11. UDP is bound at residue K39. Residues H205 and R211 each contribute to the UDP-alpha-D-glucose site. Alpha-D-glucose 6-phosphate is bound by residues H291, E292, Q294, H297, and K301. R331 is a UDP binding site. Residue R331 coordinates UDP-alpha-D-glucose. The residue at position 412 (S412) is a Phosphoserine. H501 contributes to the alpha-D-glucose 6-phosphate binding site. Residues E510, W512, and G513 each contribute to the UDP-alpha-D-glucose site. Residue T515 participates in UDP binding. Alpha-D-glucose 6-phosphate contacts are provided by R582 and R586. The disordered stretch occupies residues 629–735; it reads DATQGYRYPR…PASSLGEERN (107 aa). Residue S641 is modified to Phosphoserine; by DYRK2, GSK3-alpha, GSK3-beta and PASK. Phosphoserine; by GSK3-alpha and GSK3-beta occurs at positions 645 and 649. At S652 the chain carries Phosphoserine. The residue at position 653 (S653) is a Phosphoserine; by GSK3-alpha and GSK3-beta. The residue at position 657 (S657) is a Phosphoserine; by CK2. Residues 658–681 are compositionally biased toward acidic residues; that stretch reads EDEEEPRDGLPEEDGERYDEDEEA. The span at 682 to 695 shows a compositional bias: basic and acidic residues; it reads AKDRRNIRAPEWPR. S698 carries the post-translational modification Phosphoserine. The segment covering 698–735 has biased composition (low complexity); the sequence is SCTSSSGGSKRSNSVDTSSLSTPSEPLSPASSLGEERN. Residue T700 is modified to Phosphothreonine. 2 positions are modified to phosphoserine: S709 and S711. At T719 the chain carries Phosphothreonine. Phosphoserine occurs at positions 725 and 729.

The protein belongs to the glycosyltransferase 3 family. As to quaternary structure, part of the GYS1-GYG1 complex, a heterooctamer composed of a tetramer of GYS1 and 2 dimers of GYG1, where each GYS1 protomer binds to one GYG1 subunit (via GYG1 C-terminus); the GYS1 tetramer may dissociate from GYG1 dimers to continue glycogen polymerization on its own. Phosphorylation at Ser-8 is required for modification of Ser-11 by casein kinase I. Post-translationally, phosphorylated at Ser-641 by PASK, leading to inactivation; phosphorylation by PASK is inhibited by glycogen. Dephosphorylation at Ser-641 and Ser-645 by PP1 activates the enzyme. Phosphorylation at Ser-8 by AMPK inactivates the enzyme activity. Phosphorylated at Ser-641 by DYRK2, leading to inactivation. Primed phosphorylation at Ser-657 (site 5) by CSNK2A1 and CSNK2A2 is required for inhibitory phosphorylation at Ser-641 (site 3a), Ser-645 (site 3b), Ser-649 (site 3c) and Ser-653 (site 4) by GSK3A and GSK3B.

The catalysed reaction is [(1-&gt;4)-alpha-D-glucosyl](n) + UDP-alpha-D-glucose = [(1-&gt;4)-alpha-D-glucosyl](n+1) + UDP + H(+). It functions in the pathway glycan biosynthesis; glycogen biosynthesis. Its activity is regulated as follows. Allosteric activation by glucose-6-phosphate. Phosphorylation reduces the activity towards UDP-glucose. When in the non-phosphorylated state, glycogen synthase does not require glucose-6-phosphate as an allosteric activator; when phosphorylated it does. In terms of biological role, glycogen synthase participates in the glycogen biosynthetic process along with glycogenin and glycogen branching enzyme. Extends the primer composed of a few glucose units formed by glycogenin by adding new glucose units to it. In this context, glycogen synthase transfers the glycosyl residue from UDP-Glc to the non-reducing end of alpha-1,4-glucan. The protein is Glycogen [starch] synthase, muscle of Oryctolagus cuniculus (Rabbit).